The sequence spans 61 residues: Large ribosomal subunit protein bL32 (61 aa).

Positions 1-16 (MAVPKRKTSPSKRGMR) are enriched in basic residues. Residues 1 to 35 (MAVPKRKTSPSKRGMRRSADGLKSATYVEDKNSGE) are disordered.

The protein belongs to the bacterial ribosomal protein bL32 family.

The polypeptide is Large ribosomal subunit protein bL32 (Agrobacterium fabrum (strain C58 / ATCC 33970) (Agrobacterium tumefaciens (strain C58))).